A 222-amino-acid polypeptide reads, in one-letter code: Sugar fermentation stimulation protein homolog (222 aa).

This sequence belongs to the SfsA family.

The polypeptide is Sugar fermentation stimulation protein homolog (Thermoplasma acidophilum (strain ATCC 25905 / DSM 1728 / JCM 9062 / NBRC 15155 / AMRC-C165)).